The chain runs to 180 residues: Chromosome-anchoring protein RacA (180 aa).

The segment at residues 5–25 is a DNA-binding region (H-T-H motif); it reads TPFIAKKLGVSPKAVVRIAQQ. The stretch at 90–150 forms a coiled coil; it reads HDFEQLAAQL…KLEAGLKKEE (61 aa).

The protein belongs to the RacA family.

Its subcellular location is the cytoplasm. In terms of biological role, required for the formation of axial filaments and for anchoring the origin regions at the cell poles in sporulating cells, thus ensuring proper chromosome segregation in the prespore. Binds in a dispersed manner throughout the chromosome but preferentially to sites clustered in the origin portion of the chromosome, causing condensation of the chromosome and its remodeling into an elongated, anchored structure. The chain is Chromosome-anchoring protein RacA from Bacillus anthracis (strain A0248).